The chain runs to 96 residues: Co-chaperonin GroES 1 (96 aa).

This sequence belongs to the GroES chaperonin family. As to quaternary structure, heptamer of 7 subunits arranged in a ring. Interacts with the chaperonin GroEL.

It localises to the cytoplasm. Functionally, together with the chaperonin GroEL, plays an essential role in assisting protein folding. The GroEL-GroES system forms a nano-cage that allows encapsulation of the non-native substrate proteins and provides a physical environment optimized to promote and accelerate protein folding. GroES binds to the apical surface of the GroEL ring, thereby capping the opening of the GroEL channel. The polypeptide is Co-chaperonin GroES 1 (Vibrio vulnificus (strain CMCP6)).